The sequence spans 381 residues: CD2 homolog (381 aa).

Positions 1 to 16 (MIIKLIFLICFKIVLS) are cleaved as a signal peptide. At 17 to 208 (INYWVRYNDT…QNYFLENIHT (192 aa)) the chain is on the extracellular side. 12 N-linked (GlcNAc...) asparagine; by host glycosylation sites follow: asparagine 24, asparagine 73, asparagine 77, asparagine 85, asparagine 91, asparagine 104, asparagine 121, asparagine 133, asparagine 144, asparagine 176, asparagine 183, and asparagine 189. 2 cysteine pairs are disulfide-bonded: cysteine 122–cysteine 190 and cysteine 129–cysteine 173. A helical transmembrane segment spans residues 209-229 (LFYMIIFIVSGITISIFISII). The Cytoplasmic portion of the chain corresponds to 230 to 381 (TFLSLRKRKK…ISLIHVDRII (152 aa)). The segment at 243–278 (EIESPPPESNEEEQCQHDDTTSIHEPSPREPLLPKP) is disordered. A compositionally biased stretch (basic and acidic residues) spans 256–270 (QCQHDDTTSIHEPSP). 7 consecutive repeat copies span residues 305–310 (KPCPPP), 311–316 (KPCPPP), 317–322 (KPCPPP), 323–328 (KPCPPP), 329–334 (KPCPPP), 335–340 (KPCPPP), and 341–346 (KPCPPP). The segment at 305–334 (KPCPPPKPCPPPKPCPPPKPCPPPKPCPPP) is 7 X 6 AA tandem repeats of K-[LP]-C-[PRS]-[PS]-[PS]. The segment at 341–362 (KPCPPPESYSPPKPLPSIPLLP) is disordered.

Belongs to the asfivirus CD2 homolog protein family. Both glycosylated and nonglycosylated forms interact (via C-terminus) with the host AP-1 complex. Post-translationally, cleaved into two fragments of 63 kDa and 26 kDa containing respectively the glycosylated N-terminus and the nonglycosylated C-terminus. A full-length 89-kDa glycosylated form also exists.

It localises to the host membrane. Its subcellular location is the virion membrane. The protein localises to the host Golgi apparatus. May play an immunosuppressive role by inhibiting lymphocyte proliferation and subsequently facilitating viral replication and generalization of infection. Responsible for viral hemadsorption, which may help viral spread. Increases virus replication in the tick vector at the step of virus uptake or replication in the tick gut. May play a role in the host Golgi reorganization to yield viral factories. May play a role in host cell penetration. The sequence is that of CD2 homolog from African swine fever virus (isolate Warthog/Namibia/Wart80/1980) (ASFV).